A 1022-amino-acid chain; its full sequence is MGDFVEDFVRYLKEIAAKWREEWERARLHEADVDPNRPKFYVTAAFPYPNSPMHLGHSRTYSVTDAYARFKRMRGFNVLFPMGFHYTGTPIIAMSEKVKQGLQALRSLGEVKTILEEIWKIKVERNLSIGEAIKEYLRGAGREDLMDKTDSIEYLVLFYKVFEIPVEDLEKLTEPLSMANYFASITEEGMKELGYMIDWRRKFTTVDPDFQKFITWQFLKLYDLGYVEKGTHPVAWDPVYDTPVSQHDTKGDVEPEIEEYDVILFKLKDEDLYLPAATLRAETVFGVTNVWLNPEAEYEVVEVDGKRWVLSKKAAYKIKFQKDEVKSLGPIDPKKLLKKMVINPATEEEVPVLPARFVDPNVATGVVMSVPAHAPFDYVALKELEGDPEYSDIVKSIELVQVIRVPEEGLLVPQLVEKLGIRDTSDKKKLEEATREVYSKEYRKGRMLESVLERVKGDERLRAALKAFLGNDPVPDAREKTAKWLKLFGAGDVFYEIKNAPVYSRFGNEVVVKVLKDQWFLNYGDPQWKELARKALARMRIIPENFLKEFEDTIDWLQKRACARTRGLGTPLPWDKRWIIESLSDSTIYMAFYTVVNILRGASVEPEKLQPEVWDYIMLGKGNPKELEEKYGISAAVLEEARRSFDYWYPVDSRHSGKDLIRNHLTFFIFNHAAIFPEDKWPRQIVVNGFVNLEGKKMSKSLGNIIPITVAIRSFAPDIIRLVLLHSAELGSDADFRTEMVSRAISNLREIKSIVEKVKDYNGPRPANLTMLDAWYLSSFVKDVENVTNMMEDLKIREVTNVLYFILLNRTKEYLNALEAMGRGLDEVAKWVLRYTVERWVKMMTPFTPFFAEEMWHELGFNTFVVTEPWPVKDEELVNPLAEAAKEYVEKVIEDIKEIIKVAKIEKPKKVRIEVASPEQVKMLKMAVEFVNSGKSLREFMAEATKVFGKKEAKSLRQAFERATSLSESMRSVIARGEFDEKAVLEEFKRLIEEEVGSEVEIRRYEGGKKRPEPLRPAIYVE.

The 'HIGH' region signature appears at 47 to 57; that stretch reads PYPNSPMHLGH. A 'KMSKS' region motif is present at residues 697–701; it reads KMSKS. ATP is bound at residue K700.

Belongs to the class-I aminoacyl-tRNA synthetase family.

The protein resides in the cytoplasm. The enzyme catalyses tRNA(Leu) + L-leucine + ATP = L-leucyl-tRNA(Leu) + AMP + diphosphate. This chain is Leucine--tRNA ligase, found in Ignicoccus hospitalis (strain KIN4/I / DSM 18386 / JCM 14125).